Consider the following 671-residue polypeptide: tRNA(Met) cytidine acetyltransferase TmcA (671 aa).

Residues Gln-180, 202-211 (GRGKSALAGQ), and Arg-319 each bind ATP. The N-acetyltransferase domain occupies 349–531 (IRFSAFTQAL…SGCYTAMALL (183 aa)). Residues 461–463 (IAV), 468–474 (QREGIGQ), Glu-499, and Arg-506 each bind acetyl-CoA.

The protein belongs to the RNA cytidine acetyltransferase family. TmcA subfamily.

The protein localises to the cytoplasm. The enzyme catalyses cytidine(34) in elongator tRNA(Met) + acetyl-CoA + ATP + H2O = N(4)-acetylcytidine(34) in elongator tRNA(Met) + ADP + phosphate + CoA + H(+). Its function is as follows. Catalyzes the formation of N(4)-acetylcytidine (ac(4)C) at the wobble position of tRNA(Met), by using acetyl-CoA as an acetyl donor and ATP (or GTP). The polypeptide is tRNA(Met) cytidine acetyltransferase TmcA (Citrobacter koseri (strain ATCC BAA-895 / CDC 4225-83 / SGSC4696)).